The following is a 107-amino-acid chain: Biphenyl 2,3-dioxygenase, ferredoxin component (107 aa).

The 96-residue stretch at threonine 4 to valine 99 folds into the Rieske domain. The [2Fe-2S] cluster site is built by cysteine 43, histidine 45, cysteine 62, and histidine 65.

This sequence belongs to the bacterial ring-hydroxylating dioxygenase ferredoxin component family. As to quaternary structure, the multicomponent biphenyl dioxygenase system is composed of a ferredoxin reductase (BphA4), a ferredoxin (BphA3), and a terminal oxygenase (BphA1A2). It depends on [2Fe-2S] cluster as a cofactor.

It functions in the pathway xenobiotic degradation; biphenyl degradation. In terms of biological role, ferredoxin component of the biphenyl dioxygenase system that catalyzes the stereospecific dihydroxylation of the aromatic ring of biphenyl, yielding a dihydrodiol compound. Is likely involved in biphenyl degradation that allows growth of Rhodococcus sp. strain RHA1 on biphenyl as the sole source of carbon and energy. The dioxygenase system can also use naphtalene and 4-chlorobiphenyl (4-CB) as substrates, as well as some polychlorinated biphenyls (PCB) such as 2,2'-dichlorobiphenyl, 2,3-dichlorobiphenyl and 2,5,2'-trichlorobiphenyl. It exhibits weak activity toward dibenzofuran and dibenzo-p-dioxin. Electrons are transferred from NADH to the [2Fe-2S] cluster in BphA1 via FAD of BphA4 and [2Fe-2S] cluster of BphA3. The polypeptide is Biphenyl 2,3-dioxygenase, ferredoxin component (Rhodococcus jostii (strain RHA1)).